Consider the following 311-residue polypeptide: Syndecan-1 (311 aa).

A signal peptide spans 1-22 (MRRAALWLWLCALALRLQPALP). The Extracellular segment spans residues 23 to 255 (QIVAVNVPPE…SLLDRKEVLG (233 aa)). Disordered stretches follow at residues 29–59 (VPPE…LSRQ) and 152–184 (SHPH…VEGG). Residues 32 to 42 (EDQDGSGDDSD) are compositionally biased toward acidic residues. Ser-37 carries O-linked (Xyl...) (chondroitin sulfate) serine glycosylation. Asn-43 carries N-linked (GlcNAc...) asparagine glycosylation. 2 O-linked (Xyl...) (heparan sulfate) serine glycosylation sites follow: Ser-45 and Ser-47. O-linked (Xyl...) (chondroitin sulfate) serine glycans are attached at residues Ser-207 and Ser-217. Residues 256–276 (GVIAGGLVGLIFAVCLVAFML) form a helical membrane-spanning segment. The Cytoplasmic segment spans residues 277-311 (YRMKKKDEGSYSLEEPKQANGGAYQKPTKQEEFYA). The tract at residues 285-311 (GSYSLEEPKQANGGAYQKPTKQEEFYA) is disordered. Ser-286 carries the phosphoserine modification.

The protein belongs to the syndecan proteoglycan family. As to quaternary structure, interacts with CDCP1. Interacts (via C-terminus) with TIAM1 (via PDZ domain). Interacts with MDK. In terms of processing, shedding is enhanced by a number of factors such as heparanase, thrombin or EGF. Also by stress and wound healing. PMA-mediated shedding is inhibited by TIMP3.

It localises to the membrane. The protein resides in the secreted. It is found in the extracellular exosome. Functionally, cell surface proteoglycan that contains both heparan sulfate and chondroitin sulfate and that links the cytoskeleton to the interstitial matrix. Regulates exosome biogenesis in concert with SDCBP and PDCD6IP. Able to induce its own expression in dental mesenchymal cells and also in the neighboring dental epithelial cells via an MSX1-mediated pathway. The polypeptide is Syndecan-1 (Mus musculus (Mouse)).